A 102-amino-acid polypeptide reads, in one-letter code: Small ribosomal subunit protein uS10 (102 aa).

The protein belongs to the universal ribosomal protein uS10 family. Part of the 30S ribosomal subunit.

Involved in the binding of tRNA to the ribosomes. The protein is Small ribosomal subunit protein uS10 of Streptococcus thermophilus (strain ATCC BAA-491 / LMD-9).